The primary structure comprises 235 residues: Enolase-phosphatase E1 (235 aa).

It belongs to the HAD-like hydrolase superfamily. MasA/MtnC family. As to quaternary structure, monomer. Mg(2+) serves as cofactor.

It carries out the reaction 5-methylsulfanyl-2,3-dioxopentyl phosphate + H2O = 1,2-dihydroxy-5-(methylsulfanyl)pent-1-en-3-one + phosphate. It participates in amino-acid biosynthesis; L-methionine biosynthesis via salvage pathway; L-methionine from S-methyl-5-thio-alpha-D-ribose 1-phosphate: step 3/6. The protein operates within amino-acid biosynthesis; L-methionine biosynthesis via salvage pathway; L-methionine from S-methyl-5-thio-alpha-D-ribose 1-phosphate: step 4/6. Bifunctional enzyme that catalyzes the enolization of 2,3-diketo-5-methylthiopentyl-1-phosphate (DK-MTP-1-P) into the intermediate 2-hydroxy-3-keto-5-methylthiopentenyl-1-phosphate (HK-MTPenyl-1-P), which is then dephosphorylated to form the acireductone 1,2-dihydroxy-3-keto-5-methylthiopentene (DHK-MTPene). In Gluconacetobacter diazotrophicus (strain ATCC 49037 / DSM 5601 / CCUG 37298 / CIP 103539 / LMG 7603 / PAl5), this protein is Enolase-phosphatase E1.